The sequence spans 548 residues: Probable manganese-dependent inorganic pyrophosphatase (548 aa).

The PPase part 1 stretch occupies residues 1-74 (MKALERVYVI…HIETLEPTVE (74 aa)). Positions 12, 16, and 18 each coordinate Mn(2+). CBS domains are found at residues 77 to 132 (ELKN…RLKI) and 254 to 311 (MSKK…VILV). The tract at residues 306–548 (KKVILVDHNE…KIGEVLRRER (243 aa)) is PPase part 2. Mn(2+) contacts are provided by Asp312, His334, and Asp386.

Belongs to the PPase class C family. Mn(2+) serves as cofactor.

Its subcellular location is the cytoplasm. It catalyses the reaction diphosphate + H2O = 2 phosphate + H(+). The protein is Probable manganese-dependent inorganic pyrophosphatase (ppaC) of Thermotoga maritima (strain ATCC 43589 / DSM 3109 / JCM 10099 / NBRC 100826 / MSB8).